The chain runs to 316 residues: Ribose-phosphate pyrophosphokinase (316 aa).

Residues 41–43 and 100–101 contribute to the ATP site; these read DGE and RQ. Residues H134 and D175 each coordinate Mg(2+). The active site involves K198. D-ribose 5-phosphate-binding positions include R200, D224, and 228 to 232; that span reads DTARS.

It belongs to the ribose-phosphate pyrophosphokinase family. Class I subfamily. Homohexamer. Requires Mg(2+) as cofactor.

It is found in the cytoplasm. The catalysed reaction is D-ribose 5-phosphate + ATP = 5-phospho-alpha-D-ribose 1-diphosphate + AMP + H(+). Its pathway is metabolic intermediate biosynthesis; 5-phospho-alpha-D-ribose 1-diphosphate biosynthesis; 5-phospho-alpha-D-ribose 1-diphosphate from D-ribose 5-phosphate (route I): step 1/1. Functionally, involved in the biosynthesis of the central metabolite phospho-alpha-D-ribosyl-1-pyrophosphate (PRPP) via the transfer of pyrophosphoryl group from ATP to 1-hydroxyl of ribose-5-phosphate (Rib-5-P). This is Ribose-phosphate pyrophosphokinase from Thermosipho africanus (strain TCF52B).